The sequence spans 571 residues: Carboxylesterase 3 (571 aa).

An N-terminal signal peptide occupies residues 1–26 (MERAVRVESGVLVGVVCLLLACPATA). An intrachain disulfide couples C97 to C124. Residue N105 is glycosylated (N-linked (GlcNAc...) asparagine). S229 serves as the catalytic Acyl-ester intermediate. C281 and C292 are disulfide-bonded. Active-site charge relay system residues include E347 and H460. Positions 568 to 571 (QEDL) match the Prevents secretion from ER motif.

Belongs to the type-B carboxylesterase/lipase family. N-glycosylated. As to expression, expressed in liver, colon and small intestine.

The protein localises to the endoplasmic reticulum lumen. The catalysed reaction is a carboxylic ester + H2O = an alcohol + a carboxylate + H(+). Involved in the detoxification of xenobiotics and in the activation of ester and amide prodrugs. Shows low catalytic efficiency for hydrolysis of CPT-11 (7-ethyl-10-[4-(1-piperidino)-1-piperidino]-carbonyloxycamptothecin), a prodrug for camptothecin used in cancer therapeutics. This chain is Carboxylesterase 3 (CES3), found in Homo sapiens (Human).